The following is a 358-amino-acid chain: Aromatic amino acid aminotransferase (358 aa).

Lysine 222 carries the post-translational modification N6-(pyridoxal phosphate)lysine.

This sequence belongs to the class-II pyridoxal-phosphate-dependent aminotransferase family. In terms of assembly, homodimer. The cofactor is pyridoxal 5'-phosphate.

The enzyme catalyses an aromatic L-alpha-amino acid + 2-oxoglutarate = an aromatic oxo-acid + L-glutamate. Its function is as follows. Aminotransferase that catalyzes the conversion of aromatic amino acids and 2-oxoglutarate into corresponding aromatic oxo acids and L-glutamate. This chain is Aromatic amino acid aminotransferase, found in Mycobacterium sp. (strain KMS).